Consider the following 573-residue polypeptide: MSDKPLTDVTFSSFDLHPALIAGLESAGFTRCTPIQALTLPVALPGGDVAGQAQTGTGKTLAFLVAVMNRLLIRPALADRKPEDPRALILAPTRELAIQIHKDAVKFGADLGLRFALVYGGVDYDKQRELLQQGVDVIIATPGRLIDYVKQHKVVSLHACEICVLDEADRMFDLGFIKDIRFLLRRMPERGTRQTLLFSATLSHRVLELAYEHMNEPEKLVVETESITAARVRQRIYFPSDEEKQTLLLGLLSRSEGARTMVFVNTKAFVERVARTLERHGYRVGVLSGDVPQKKRESLLNRFQKGQLEILVATDVAARGLHIDGVKYVYNYDLPFDAEDYVHRIGRTARLGEEGDAISFACERYAMSLPDIEAYIEQKIPVEPVTSELLTPLPRAPRVPVEGEEADDDAGDSVGTIFREAREQRAAEEQRRGGGRSGSGGSRSGSGGGGGRREGAGADGKPRPRRKPRVEGQAPATAASTEHPVVAAAAGQAPSAGVADAERAPRKRRRRRNGRPVEGAEPAVASTPVPAPAAPRKPTQVVAKPVRAAAKPSGSPSLLSRIGRRLRSLVSGN.

The Q motif motif lies at 9-37 (VTFSSFDLHPALIAGLESAGFTRCTPIQA). The region spanning 40 to 220 (LPVALPGGDV…YEHMNEPEKL (181 aa)) is the Helicase ATP-binding domain. 53–60 (AQTGTGKT) serves as a coordination point for ATP. Positions 166-169 (DEAD) match the DEAD box motif. In terms of domain architecture, Helicase C-terminal spans 231-393 (RVRQRIYFPS…PVTSELLTPL (163 aa)). Residues 391 to 560 (TPLPRAPRVP…KPSGSPSLLS (170 aa)) are disordered. The segment covering 402 to 411 (EGEEADDDAG) has biased composition (acidic residues). The span at 419–432 (REAREQRAAEEQRR) shows a compositional bias: basic and acidic residues. Residues 435–450 (GRSGSGGSRSGSGGGG) are compositionally biased toward gly residues. A compositionally biased stretch (basic and acidic residues) spans 451–462 (GRREGAGADGKP). Over residues 484–499 (PVVAAAAGQAPSAGVA) the composition is skewed to low complexity. The span at 505 to 514 (PRKRRRRRNG) shows a compositional bias: basic residues. Residues 541–560 (VVAKPVRAAAKPSGSPSLLS) show a composition bias toward low complexity.

The protein belongs to the DEAD box helicase family. RhlB subfamily. As to quaternary structure, component of the RNA degradosome, which is a multiprotein complex involved in RNA processing and mRNA degradation.

Its subcellular location is the cytoplasm. The catalysed reaction is ATP + H2O = ADP + phosphate + H(+). Its function is as follows. DEAD-box RNA helicase involved in RNA degradation. Has RNA-dependent ATPase activity and unwinds double-stranded RNA. The chain is ATP-dependent RNA helicase RhlB from Xanthomonas euvesicatoria pv. vesicatoria (strain 85-10) (Xanthomonas campestris pv. vesicatoria).